The chain runs to 294 residues: GTPase Era (294 aa).

Residues 4-170 (KSGFVSVIGR…VEEIFTFLPE (167 aa)) enclose the Era-type G domain. Residues 12–19 (GRPNVGKS) form a G1 region. Residue 12-19 (GRPNVGKS) participates in GTP binding. Positions 38–42 (QTTRN) are G2. Positions 59-62 (DTPG) are G3. GTP-binding positions include 59 to 63 (DTPGI) and 121 to 124 (NKID). A G4 region spans residues 121–124 (NKID). The G5 stretch occupies residues 149-151 (ISA). The KH type-2 domain maps to 201-278 (TREEVPYGVA…YLDLWVKIEK (78 aa)).

The protein belongs to the TRAFAC class TrmE-Era-EngA-EngB-Septin-like GTPase superfamily. Era GTPase family. Monomer.

The protein localises to the cytoplasm. The protein resides in the cell inner membrane. In terms of biological role, an essential GTPase that binds both GDP and GTP, with rapid nucleotide exchange. Plays a role in 16S rRNA processing and 30S ribosomal subunit biogenesis and possibly also in cell cycle regulation and energy metabolism. The protein is GTPase Era of Halothermothrix orenii (strain H 168 / OCM 544 / DSM 9562).